The chain runs to 291 residues: Acetyl-coenzyme A carboxylase carboxyl transferase subunit beta (291 aa).

The CoA carboxyltransferase N-terminal domain maps to Met34–Glu291. The Zn(2+) site is built by Cys38, Cys41, Cys57, and Cys60. The C4-type zinc finger occupies Cys38–Cys60.

It belongs to the AccD/PCCB family. As to quaternary structure, acetyl-CoA carboxylase is a heterohexamer composed of biotin carboxyl carrier protein (AccB), biotin carboxylase (AccC) and two subunits each of ACCase subunit alpha (AccA) and ACCase subunit beta (AccD). Zn(2+) serves as cofactor.

The protein localises to the cytoplasm. The catalysed reaction is N(6)-carboxybiotinyl-L-lysyl-[protein] + acetyl-CoA = N(6)-biotinyl-L-lysyl-[protein] + malonyl-CoA. It participates in lipid metabolism; malonyl-CoA biosynthesis; malonyl-CoA from acetyl-CoA: step 1/1. In terms of biological role, component of the acetyl coenzyme A carboxylase (ACC) complex. Biotin carboxylase (BC) catalyzes the carboxylation of biotin on its carrier protein (BCCP) and then the CO(2) group is transferred by the transcarboxylase to acetyl-CoA to form malonyl-CoA. This chain is Acetyl-coenzyme A carboxylase carboxyl transferase subunit beta, found in Clostridium botulinum (strain Alaska E43 / Type E3).